Here is a 396-residue protein sequence, read N- to C-terminus: Phosphoglycerate kinase (396 aa).

Residues 24 to 26, Arg-39, 62 to 65, Arg-120, and Arg-153 contribute to the substrate site; these read DFN and HLGR. ATP-binding positions include Lys-203, Gly-294, Glu-325, and 352-355; that span reads GGDS.

Belongs to the phosphoglycerate kinase family. Monomer.

It localises to the cytoplasm. It catalyses the reaction (2R)-3-phosphoglycerate + ATP = (2R)-3-phospho-glyceroyl phosphate + ADP. It participates in carbohydrate degradation; glycolysis; pyruvate from D-glyceraldehyde 3-phosphate: step 2/5. This is Phosphoglycerate kinase from Dictyoglomus turgidum (strain DSM 6724 / Z-1310).